The sequence spans 315 residues: DNA-directed RNA polymerase subunit alpha (315 aa).

Residues 1–228 (MLEIEKPKIE…EHLRLFIGLT (228 aa)) form an alpha N-terminal domain (alpha-NTD) region. The tract at residues 246-315 (DKILEMTIEE…LGLSLRQEDE (70 aa)) is alpha C-terminal domain (alpha-CTD).

This sequence belongs to the RNA polymerase alpha chain family. As to quaternary structure, homodimer. The RNAP catalytic core consists of 2 alpha, 1 beta, 1 beta' and 1 omega subunit. When a sigma factor is associated with the core the holoenzyme is formed, which can initiate transcription.

It catalyses the reaction RNA(n) + a ribonucleoside 5'-triphosphate = RNA(n+1) + diphosphate. DNA-dependent RNA polymerase catalyzes the transcription of DNA into RNA using the four ribonucleoside triphosphates as substrates. The sequence is that of DNA-directed RNA polymerase subunit alpha from Desulforamulus reducens (strain ATCC BAA-1160 / DSM 100696 / MI-1) (Desulfotomaculum reducens).